Consider the following 109-residue polypeptide: Cytochrome c oxidase subunit 6A1, mitochondrial (109 aa).

The N-terminal 24 residues, 1 to 24 (MAAAAGSRVFGLLGRSRLQLSRCM), are a transit peptide targeting the mitochondrion. Over 25 to 34 (SSGAHGEEGS) the chain is Mitochondrial matrix. A helical membrane pass occupies residues 35-59 (ARMWKALTYFVALPGVGVSMLNVFL). Topologically, residues 60-109 (KSHHGEEERPEFVAYPHLRIRSKPFPWGDGNHTLFHNPHVNPLPTGYEDE) are mitochondrial intermembrane.

It belongs to the cytochrome c oxidase subunit 6A family. As to quaternary structure, component of the cytochrome c oxidase (complex IV, CIV), a multisubunit enzyme composed of 14 subunits. The complex is composed of a catalytic core of 3 subunits MT-CO1, MT-CO2 and MT-CO3, encoded in the mitochondrial DNA, and 11 supernumerary subunits COX4I1 (or COX4I2), COX5A, COX5B, COX6A2 (or COX6A1), COX6B1 (or COX6B2), COX6C, COX7A1 (or COX7A2), COX7B, COX7C, COX8B and NDUFA4, which are encoded in the nuclear genome. The complex exists as a monomer or a dimer and forms supercomplexes (SCs) in the inner mitochondrial membrane with NADH-ubiquinone oxidoreductase (complex I, CI) and ubiquinol-cytochrome c oxidoreductase (cytochrome b-c1 complex, complex III, CIII), resulting in different assemblies (supercomplex SCI(1)III(2)IV(1) and megacomplex MCI(2)III(2)IV(2)).

It localises to the mitochondrion inner membrane. It participates in energy metabolism; oxidative phosphorylation. In terms of biological role, component of the cytochrome c oxidase, the last enzyme in the mitochondrial electron transport chain which drives oxidative phosphorylation. The respiratory chain contains 3 multisubunit complexes succinate dehydrogenase (complex II, CII), ubiquinol-cytochrome c oxidoreductase (cytochrome b-c1 complex, complex III, CIII) and cytochrome c oxidase (complex IV, CIV), that cooperate to transfer electrons derived from NADH and succinate to molecular oxygen, creating an electrochemical gradient over the inner membrane that drives transmembrane transport and the ATP synthase. Cytochrome c oxidase is the component of the respiratory chain that catalyzes the reduction of oxygen to water. Electrons originating from reduced cytochrome c in the intermembrane space (IMS) are transferred via the dinuclear copper A center (CU(A)) of subunit 2 and heme A of subunit 1 to the active site in subunit 1, a binuclear center (BNC) formed by heme A3 and copper B (CU(B)). The BNC reduces molecular oxygen to 2 water molecules unsing 4 electrons from cytochrome c in the IMS and 4 protons from the mitochondrial matrix. In Bos taurus (Bovine), this protein is Cytochrome c oxidase subunit 6A1, mitochondrial (COX6A1).